We begin with the raw amino-acid sequence, 354 residues long: S-adenosylmethionine:tRNA ribosyltransferase-isomerase (354 aa).

It belongs to the QueA family. In terms of assembly, monomer.

The protein resides in the cytoplasm. The catalysed reaction is 7-aminomethyl-7-carbaguanosine(34) in tRNA + S-adenosyl-L-methionine = epoxyqueuosine(34) in tRNA + adenine + L-methionine + 2 H(+). Its pathway is tRNA modification; tRNA-queuosine biosynthesis. Functionally, transfers and isomerizes the ribose moiety from AdoMet to the 7-aminomethyl group of 7-deazaguanine (preQ1-tRNA) to give epoxyqueuosine (oQ-tRNA). In Pseudomonas syringae pv. tomato (strain ATCC BAA-871 / DC3000), this protein is S-adenosylmethionine:tRNA ribosyltransferase-isomerase.